Here is a 290-residue protein sequence, read N- to C-terminus: Shikimate dehydrogenase (NADP(+)) (290 aa).

Shikimate is bound by residues 24–26 (SLS) and Thr71. The active-site Proton acceptor is the Lys75. The shikimate site is built by Asn96 and Asp111. NADP(+)-binding positions include 136–140 (GAGGA), 160–165 (NRTVDR), and Leu233. Tyr235 lines the shikimate pocket. Residue Gly256 coordinates NADP(+).

It belongs to the shikimate dehydrogenase family. As to quaternary structure, homodimer.

It catalyses the reaction shikimate + NADP(+) = 3-dehydroshikimate + NADPH + H(+). The protein operates within metabolic intermediate biosynthesis; chorismate biosynthesis; chorismate from D-erythrose 4-phosphate and phosphoenolpyruvate: step 4/7. Its function is as follows. Involved in the biosynthesis of the chorismate, which leads to the biosynthesis of aromatic amino acids. Catalyzes the reversible NADPH linked reduction of 3-dehydroshikimate (DHSA) to yield shikimate (SA). The chain is Shikimate dehydrogenase (NADP(+)) from Methanopyrus kandleri (strain AV19 / DSM 6324 / JCM 9639 / NBRC 100938).